Consider the following 168-residue polypeptide: Pathogenesis-related protein 1B (168 aa).

A signal peptide spans 1–30; it reads MGFFLFSQMPSFFLVSTLLLFLIISHSSHA. The 119-residue stretch at 38–156 folds into the SCP domain; that stretch reads LDAHNTARAD…NGGYVVSCNY (119 aa).

The protein belongs to the CRISP family. Post-translationally, three disulfide bonds are present.

Its subcellular location is the vacuole. Its function is as follows. Probably involved in the defense reaction of plants against pathogens. This Nicotiana tabacum (Common tobacco) protein is Pathogenesis-related protein 1B.